We begin with the raw amino-acid sequence, 255 residues long: Protein 2b (255 aa).

This sequence belongs to the tobravirus protein 2b family.

It localises to the virion. Functionally, may function by interacting with a small, flexible domain located at the C-terminus of the CP, forming a bridge between the virus particle and the internal surface of the vector nematode feeding apparatus. The protein is Protein 2b of Phaseolus vulgaris (Kidney bean).